We begin with the raw amino-acid sequence, 647 residues long: LIM domain kinase 1 (647 aa).

LIM zinc-binding domains lie at 25–75 (CASC…CKKD) and 84–137 (CHGC…CGHC). The 94-residue stretch at 165 to 258 (LVSIPASSHG…LLQLTLEHDP (94 aa)) folds into the PDZ domain. S210 bears the Phosphoserine mark. T229 is subject to Phosphothreonine. The disordered stretch occupies residues 260-319 (DTLGHGLGPETSPLSSPAYTPSGEAGSSARQKPVLRSCSIDRSPGAGSLGSPASQRKDLG). Residues S298, S302, S307, and S310 each carry the phosphoserine modification. The span at 302-313 (SPGAGSLGSPAS) shows a compositional bias: low complexity. S323 bears the Phosphoserine; by MAPKAPK2 mark. S337 bears the Phosphoserine mark. Positions 339 to 604 (LIHGEVLGKG…PSFVKLEHWL (266 aa)) constitute a Protein kinase domain. Residues 345–353 (LGKGCFGQA) and K368 each bind ATP. The active site involves D460. Phosphothreonine; by ROCK1 and PAK1 is present on T508.

Belongs to the protein kinase superfamily. TKL Ser/Thr protein kinase family. Interacts (via LIM domain) with the cytoplasmic domain of NRG1. Interacts with NISCH. Interacts with RLIM and RNF6. Self-associates to form homodimers. Interacts with HSP90AA1; this interaction promotes LIMK1 dimerization and subsequent transphosphorylation. Interacts with CDKN1C. Interacts with SSH1. Interacts with ROCK1. Interacts (via LIM zinc-binding domains) with FAM89B/LRAP25 (via LRR repeat). Forms a tripartite complex with CDC42BPA, CDC42BPB and FAM89B/LRAP25. In terms of processing, autophosphorylated. Phosphorylated on Thr-508 by ROCK1 and PAK1, resulting in activation. Phosphorylated by PAK4 which increases the ability of LIMK1 to phosphorylate cofilin. Phosphorylated at Ser-323 by MAPKAPK2 during activation of VEGFA-induced signaling, which results in activation of LIMK1 and promotion of actin reorganization, cell migration, and tubule formation of endothelial cells. Dephosphorylated and inactivated by SSH1. Phosphorylated by CDC42BP. Ubiquitinated. 'Lys-48'-linked polyubiquitination by RNF6 leads to proteasomal degradation through the 26S proteasome, modulating LIMK1 levels in the growth cone and its effect on axonal outgrowth. Also polyubiquitinated by RLIM. In terms of tissue distribution, highest expression in both adult and fetal nervous system. Detected ubiquitously throughout the different regions of adult brain, with highest levels in the cerebral cortex. Expressed to a lesser extent in heart and skeletal muscle.

It localises to the cytoplasm. The protein resides in the nucleus. Its subcellular location is the cytoskeleton. The protein localises to the cell projection. It is found in the lamellipodium. It carries out the reaction L-seryl-[protein] + ATP = O-phospho-L-seryl-[protein] + ADP + H(+). It catalyses the reaction L-threonyl-[protein] + ATP = O-phospho-L-threonyl-[protein] + ADP + H(+). Functionally, serine/threonine-protein kinase that plays an essential role in the regulation of actin filament dynamics. Acts downstream of several Rho family GTPase signal transduction pathways. Activated by upstream kinases including ROCK1, PAK1 and PAK4, which phosphorylate LIMK1 on a threonine residue located in its activation loop. LIMK1 subsequently phosphorylates and inactivates the actin binding/depolymerizing factors cofilin-1/CFL1, cofilin-2/CFL2 and destrin/DSTN, thereby preventing the cleavage of filamentous actin (F-actin), and stabilizing the actin cytoskeleton. In this way LIMK1 regulates several actin-dependent biological processes including cell motility, cell cycle progression, and differentiation. Phosphorylates TPPP on serine residues, thereby promoting microtubule disassembly. Stimulates axonal outgrowth and may be involved in brain development. Its function is as follows. Has a dominant negative effect on actin cytoskeletal changes. Required for atypical chemokine receptor ACKR2-induced phosphorylation of cofilin (CFL1). The polypeptide is LIM domain kinase 1 (LIMK1) (Homo sapiens (Human)).